The chain runs to 104 residues: Gastrin (104 aa).

Residues 1 to 21 (MPRLCVCMLVLVLALATFSEA) form the signal peptide. Positions 22-58 (SWKPRSQLQDASSGPRTNGALEQHQLEKLGPASHHRR) are excised as a propeptide. The segment at 23-104 (WKPRSQLQDA…RSAEEEDQYN (82 aa)) is disordered. Over residues 25-37 (PRSQLQDASSGPR) the composition is skewed to polar residues. A Sulfotyrosine modification is found at Y87. F92 bears the Phenylalanine amide mark. S96 bears the Phosphoserine mark. The propeptide occupies 96-104 (SAEEEDQYN). Sulfotyrosine is present on Y103.

Belongs to the gastrin/cholecystokinin family. Sulfation on Tyr-87 enhances proteolytic processing, and blocks peptide degradation. Levels of sulfation differ between proteolytically-cleaved gastrins and between tissues.

The protein localises to the secreted. Functionally, gastrin stimulates the stomach mucosa to produce and secrete hydrochloric acid and the pancreas to secrete its digestive enzymes. It also stimulates smooth muscle contraction and increases blood circulation and water secretion in the stomach and intestine. This Rattus norvegicus (Rat) protein is Gastrin (Gast).